Consider the following 484-residue polypeptide: Tribbles (484 aa).

Polar residues predominate over residues 1-23 (MDNSSGQNSRTASSASTSKIVNY). The segment at 1–51 (MDNSSGQNSRTASSASTSKIVNYSSPVSPGVAAATSSSSSSSSSGMSSSQE) is disordered. Residues 24-49 (SSPVSPGVAAATSSSSSSSSSGMSSS) show a composition bias toward low complexity. Residues 129 to 397 (YRHLVDLTAS…ASHIFLTPWL (269 aa)) enclose the Protein kinase domain. 2 stretches are compositionally biased toward acidic residues: residues 420-437 (AEED…DEEG) and 475-484 (PEPDTDVDMG). Disordered stretches follow at residues 420–443 (AEED…PLGD) and 464–484 (MAQN…VDMG).

The protein belongs to the protein kinase superfamily. CAMK Ser/Thr protein kinase family. Tribbles subfamily. Interacts with slbo. Interacts with Akt1. Expressed throughout the brain with highest levels of expression detected in the cell body rind and lower levels of expression detected in the neurophil (at protein level).

It localises to the nucleus. The protein localises to the cytoplasm. The protein resides in the cell cortex. Functionally, adapter protein that negatively regulates different signaling pathways to coordinate cell differentiation, proliferation, migration and growth. Functions by binding to key regulatory proteins and either blocks their activity or regulates their turnover by the proteasome. In various developing tissues functions as a cell cycle regulator that mediates cell proliferation according to the requirements of the developmental program. Acts by inducing the proteasomal degradation of the CD25 mitotic activators stg and twe at critical stages of development to delay entry into mitosis and thus mediate cell proliferation. During gastrulation, negatively regulates stg to delay mitosis in the ventral region of the embryonic mesoderm thus allowing invagination to be completed before cell division takes place. Delaying stg-dependent mitosis during bristle development and in migrating germline pole cells also arrests their cell divisions, whereas in cystocytes it promotes their cell divisions. Involved in the regulation of the mid-blastula transition; promotes the destruction of twe resulting in the cell cycle arrest in G2 of cycle 14 which delays mitosis and thus reduces cell proliferation allowing cell fate specification and morphogenesis to take place. In germline cells, blocks border cell migration during oogenesis by binding to slbo/C/EBP and promoting its ubiquitination and degradation by the proteasome. May function in a negative feedback loop with slbo to coordinate proper border cell migration. During tissue growth negatively regulates insulin signaling by binding to Akt1 and blocking its phosphorylation-dependent activation. However it may also function downstream in the insulin signaling pathway, acting with Akt1 to direct foxo degradation. Essential for the proper formation of operant place and aversive olfactory memories. In Drosophila melanogaster (Fruit fly), this protein is Tribbles.